Here is a 446-residue protein sequence, read N- to C-terminus: Tol-Pal system protein TolB (446 aa).

The first 19 residues, 1–19, serve as a signal peptide directing secretion; sequence MLLRYLFILFIIIPIKAFA.

Belongs to the TolB family. The Tol-Pal system is composed of five core proteins: the inner membrane proteins TolA, TolQ and TolR, the periplasmic protein TolB and the outer membrane protein Pal. They form a network linking the inner and outer membranes and the peptidoglycan layer.

It localises to the periplasm. In terms of biological role, part of the Tol-Pal system, which plays a role in outer membrane invagination during cell division and is important for maintaining outer membrane integrity. The chain is Tol-Pal system protein TolB from Pelagibacter ubique (strain HTCC1062).